We begin with the raw amino-acid sequence, 70 residues long: MDVNTKDGKGRIPIHYATYSKQHEITQILILLQPGSEIDTVDNYGGTPFFYLLLKHESGQNKTLLDFFLR.

The ANK repeat unit spans residues 9–43 (KGRIPIHYATYSKQHEITQILILLQPGSEIDTVDN).

The sequence is that of Putative ankyrin repeat protein RC0502 from Rickettsia conorii (strain ATCC VR-613 / Malish 7).